A 151-amino-acid chain; its full sequence is UPF0102 protein Ava_4800 (151 aa).

The protein belongs to the UPF0102 family.

This chain is UPF0102 protein Ava_4800, found in Trichormus variabilis (strain ATCC 29413 / PCC 7937) (Anabaena variabilis).